The sequence spans 152 residues: Large ribosomal subunit protein bL9 (152 aa).

It belongs to the bacterial ribosomal protein bL9 family.

Its function is as follows. Binds to the 23S rRNA. The chain is Large ribosomal subunit protein bL9 from Thermosynechococcus vestitus (strain NIES-2133 / IAM M-273 / BP-1).